The sequence spans 136 residues: Large ribosomal subunit protein uL16 (136 aa).

It belongs to the universal ribosomal protein uL16 family. In terms of assembly, part of the 50S ribosomal subunit.

Functionally, binds 23S rRNA and is also seen to make contacts with the A and possibly P site tRNAs. The polypeptide is Large ribosomal subunit protein uL16 (Rickettsia typhi (strain ATCC VR-144 / Wilmington)).